The primary structure comprises 298 residues: 3-deoxy-manno-octulosonate cytidylyltransferase (298 aa).

Residues 22 to 42 form a helical membrane-spanning segment; sequence VWVLHGLALGAAAAAAAVAYL.

The protein belongs to the KdsB family. The cofactor is Mg(2+). In terms of tissue distribution, ubiquitous.

The protein localises to the membrane. The catalysed reaction is 3-deoxy-alpha-D-manno-oct-2-ulosonate + CTP = CMP-3-deoxy-beta-D-manno-octulosonate + diphosphate. It functions in the pathway nucleotide-sugar biosynthesis; CMP-3-deoxy-D-manno-octulosonate biosynthesis; CMP-3-deoxy-D-manno-octulosonate from 3-deoxy-D-manno-octulosonate and CTP: step 1/1. Its function is as follows. Catalyzes the production of the sugar nucleotide CMP-3-deoxy-D-manno-octulosonate (CMP-KDO). CTP is the preferred nucleotide donor, and it can partially be replaced with UTP but not with ATP. Activates KDO during the biosynthesis of rhamnogalacturonan II (RG-II), a structurally complex pectic polysaccharide of the primary cell wall. RG-II is essential for the cell wall integrity of rapidly growing tissues and pollen tube growth and elongation. The protein is 3-deoxy-manno-octulosonate cytidylyltransferase of Zea mays (Maize).